A 607-amino-acid chain; its full sequence is Elongation factor 4 (607 aa).

The tr-type G domain maps to 11-193; that stretch reads GKIRNFSIIA…QIVEKVPAPT (183 aa). Residues 23–28 and 140–143 each bind GTP; these read DHGKST and NKID.

The protein belongs to the TRAFAC class translation factor GTPase superfamily. Classic translation factor GTPase family. LepA subfamily.

The protein resides in the cell membrane. The catalysed reaction is GTP + H2O = GDP + phosphate + H(+). Required for accurate and efficient protein synthesis under certain stress conditions. May act as a fidelity factor of the translation reaction, by catalyzing a one-codon backward translocation of tRNAs on improperly translocated ribosomes. Back-translocation proceeds from a post-translocation (POST) complex to a pre-translocation (PRE) complex, thus giving elongation factor G a second chance to translocate the tRNAs correctly. Binds to ribosomes in a GTP-dependent manner. This Streptococcus pneumoniae (strain JJA) protein is Elongation factor 4.